Here is a 678-residue protein sequence, read N- to C-terminus: Penicillin-binding protein activator LpoA (678 aa).

The N-terminal stretch at 1-26 (MVPSTFSRLKAARCLPVVLAALIFAG) is a signal peptide. Residue cysteine 27 is the site of N-palmitoyl cysteine attachment. Residue cysteine 27 is the site of S-diacylglycerol cysteine attachment. Disordered regions lie at residues 304–338 (AEQP…SVPV) and 495–530 (IALT…QFTN). Over residues 513–529 (TTNNPTLQTTPTDDQFT) the composition is skewed to low complexity.

Belongs to the LpoA family. As to quaternary structure, interacts with PBP1a.

It localises to the cell outer membrane. In terms of biological role, regulator of peptidoglycan synthesis that is essential for the function of penicillin-binding protein 1A (PBP1a). The sequence is that of Penicillin-binding protein activator LpoA from Escherichia coli O6:H1 (strain CFT073 / ATCC 700928 / UPEC).